Reading from the N-terminus, the 129-residue chain is Natriuretic peptides B (129 aa).

The N-terminal stretch at 1-26 (MDPQKALSRTLLLLLFLHLSLLGCRS) is a signal peptide. A disulfide bridge connects residues Cys-107 and Cys-123.

The protein belongs to the natriuretic peptide family. In terms of processing, the precursor molecule is proteolytically cleaved, possibly by FURIN or CORIN, to produce the active peptide. May undergo further proteolytic cleavage by various proteases such as DPP4, MME and possibly FAP, to give rise to a variety of shorter peptides. May be cleaved at Pro-99 by the prolyl endopeptidase FAP (seprase) activity (in vitro). May be degraded by IDE. During IDE degradation, the resulting products initially increase the activation of NPR1 and can also stimulate NPR2 to produce cGMP before the fragments are completely degraded and inactivated by IDE (in vitro).

Its subcellular location is the secreted. Its function is as follows. Cardiac hormone that plays a key role in mediating cardio-renal homeostasis. May also function as a paracrine antifibrotic factor in the heart. Acts by specifically binding and stimulating NPR1 to produce cGMP, which in turn activates effector proteins that drive various biological responses. Involved in regulating the extracellular fluid volume and maintaining the fluid-electrolyte balance through natriuresis, diuresis, vasorelaxation, and inhibition of renin and aldosterone secretion. Binds the clearance receptor NPR3. The protein is Natriuretic peptides B (NPPB) of Ovis aries (Sheep).